Consider the following 116-residue polypeptide: Protein Rev (116 aa).

Phosphoserine; by host CK2 occurs at positions 5 and 8. The segment at Leu-18 to Asn-26 is homomultimerization. Residues Tyr-23 to Gln-49 are disordered. The Nuclear localization signal and RNA-binding (RRE) signature appears at Thr-34–Arg-50. Residues Gln-36 to Glu-47 are compositionally biased toward basic residues. The short motif at Leu-73 to Asp-84 is the Nuclear export signal and binding to XPO1 element. A phosphoserine; by host mark is found at Ser-92 and Ser-99. A disordered region spans residues Ser-92 to Glu-116.

Belongs to the HIV-1 REV protein family. Homomultimer; when bound to the RRE. Multimeric assembly is essential for activity and may involve XPO1. Binds to human KPNB1, XPO1, TNPO1, RANBP5 and IPO7. Interacts with the viral Integrase. Interacts with human KHDRBS1. Interacts with human NAP1; this interaction decreases Rev multimerization and stimulates its activity. Interacts with human DEAD-box helicases DDX3 and DDX24; these interactions may serve for viral RNA export to the cytoplasm and packaging, respectively. Interacts with human PSIP1; this interaction may inhibit HIV-1 DNA integration by promoting dissociation of the Integrase-LEDGF/p75 complex. Post-translationally, asymmetrically arginine dimethylated at one site by host PRMT6. Methylation impairs the RNA-binding activity and export of viral RNA from the nucleus to the cytoplasm. In terms of processing, phosphorylated by protein kinase CK2. Presence of, and maybe binding to the N-terminus of the regulatory beta subunit of CK2 is necessary for CK2-mediated Rev's phosphorylation.

The protein localises to the host nucleus. The protein resides in the host nucleolus. It is found in the host cytoplasm. Functionally, escorts unspliced or incompletely spliced viral pre-mRNAs (late transcripts) out of the nucleus of infected cells. These pre-mRNAs carry a recognition sequence called Rev responsive element (RRE) located in the env gene, that is not present in fully spliced viral mRNAs (early transcripts). This function is essential since most viral proteins are translated from unspliced or partially spliced pre-mRNAs which cannot exit the nucleus by the pathway used by fully processed cellular mRNAs. Rev itself is translated from a fully spliced mRNA that readily exits the nucleus. Rev's nuclear localization signal (NLS) binds directly to KPNB1/Importin beta-1 without previous binding to KPNA1/Importin alpha-1. KPNB1 binds to the GDP bound form of RAN (Ran-GDP) and targets Rev to the nucleus. In the nucleus, the conversion from Ran-GDP to Ran-GTP dissociates Rev from KPNB1 and allows Rev's binding to the RRE in viral pre-mRNAs. Rev multimerization on the RRE via cooperative assembly exposes its nuclear export signal (NES) to the surface. Rev can then form a complex with XPO1/CRM1 and Ran-GTP, leading to nuclear export of the complex. Conversion from Ran-GTP to Ran-GDP mediates dissociation of the Rev/RRE/XPO1/RAN complex, so that Rev can return to the nucleus for a subsequent round of export. Beside KPNB1, also seems to interact with TNPO1/Transportin-1, RANBP5/IPO5 and IPO7/RANBP7 for nuclear import. The nucleoporin-like HRB/RIP is an essential cofactor that probably indirectly interacts with Rev to release HIV RNAs from the perinuclear region to the cytoplasm. This is Protein Rev from Human immunodeficiency virus type 1 group M subtype B (isolate BRU/LAI) (HIV-1).